The sequence spans 126 residues: Holo-[acyl-carrier-protein] synthase (126 aa).

Residues Asp-9 and Glu-58 each coordinate Mg(2+).

The protein belongs to the P-Pant transferase superfamily. AcpS family. Mg(2+) is required as a cofactor.

It is found in the cytoplasm. It carries out the reaction apo-[ACP] + CoA = holo-[ACP] + adenosine 3',5'-bisphosphate + H(+). Transfers the 4'-phosphopantetheine moiety from coenzyme A to a Ser of acyl-carrier-protein. This is Holo-[acyl-carrier-protein] synthase from Edwardsiella ictaluri (strain 93-146).